Here is a 1173-residue protein sequence, read N- to C-terminus: DNA-directed RNA polymerase subunit beta (1173 aa).

The segment at 1–23 is disordered; sequence MEGSLLVASSTSNNETANTASTD. The span at 8-22 shows a compositional bias: low complexity; that stretch reads ASSTSNNETANTAST.

This sequence belongs to the RNA polymerase beta chain family. In terms of assembly, the RNAP catalytic core consists of 2 alpha, 1 beta, 1 beta' and 1 omega subunit. When a sigma factor is associated with the core the holoenzyme is formed, which can initiate transcription.

It catalyses the reaction RNA(n) + a ribonucleoside 5'-triphosphate = RNA(n+1) + diphosphate. Its function is as follows. DNA-dependent RNA polymerase catalyzes the transcription of DNA into RNA using the four ribonucleoside triphosphates as substrates. The chain is DNA-directed RNA polymerase subunit beta from Paenarthrobacter aurescens (strain TC1).